The chain runs to 328 residues: Ornithine carbamoyltransferase, catabolic (328 aa).

Residues 56-59, Gln83, Arg107, and 134-137 each bind carbamoyl phosphate; these read STRT and HPTQ. Residues Asn166, Asp230, and 234–235 contribute to the L-ornithine site; that span reads SM. Carbamoyl phosphate contacts are provided by residues 270–271 and Arg315; that span reads CL.

Belongs to the aspartate/ornithine carbamoyltransferase superfamily. OTCase family.

It localises to the cytoplasm. It catalyses the reaction carbamoyl phosphate + L-ornithine = L-citrulline + phosphate + H(+). Its pathway is amino-acid degradation; L-arginine degradation via ADI pathway; carbamoyl phosphate from L-arginine: step 2/2. In terms of biological role, reversibly catalyzes the transfer of the carbamoyl group from carbamoyl phosphate (CP) to the N(epsilon) atom of ornithine (ORN) to produce L-citrulline. The chain is Ornithine carbamoyltransferase, catabolic (arcB) from Borreliella afzelii (Borrelia afzelii).